A 222-amino-acid chain; its full sequence is UPF0441 protein CKO_04429 (222 aa).

Residues 177 to 194 are compositionally biased toward low complexity; it reads TVPKTAMAPKPATTTTVT. The interval 177–222 is disordered; the sequence is TVPKTAMAPKPATTTTVTRGGFGESVAKQSTMQRSATGTSNRSMGG. Residues 203-222 show a composition bias toward polar residues; it reads AKQSTMQRSATGTSNRSMGG.

It belongs to the UPF0441 family.

The polypeptide is UPF0441 protein CKO_04429 (Citrobacter koseri (strain ATCC BAA-895 / CDC 4225-83 / SGSC4696)).